Reading from the N-terminus, the 377-residue chain is tRNA pseudouridine synthase B (377 aa).

The Nucleophile role is filled by D53.

This sequence belongs to the pseudouridine synthase TruB family. Type 1 subfamily.

It catalyses the reaction uridine(55) in tRNA = pseudouridine(55) in tRNA. Functionally, responsible for synthesis of pseudouridine from uracil-55 in the psi GC loop of transfer RNAs. The protein is tRNA pseudouridine synthase B of Tropheryma whipplei (strain Twist) (Whipple's bacillus).